The following is a 270-amino-acid chain: 4-hydroxy-tetrahydrodipicolinate reductase (270 aa).

Residues 11-16 and glutamate 37 contribute to the NAD(+) site; that span reads GCQGRM. NADP(+) is bound at residue arginine 38. NAD(+) is bound by residues 101–103 and 125–128; these read GTT and ASNF. Histidine 158 (proton donor/acceptor) is an active-site residue. Residue histidine 159 coordinates (S)-2,3,4,5-tetrahydrodipicolinate. The active-site Proton donor is the lysine 162. A (S)-2,3,4,5-tetrahydrodipicolinate-binding site is contributed by 168–169; the sequence is GT.

Belongs to the DapB family.

It is found in the cytoplasm. The catalysed reaction is (S)-2,3,4,5-tetrahydrodipicolinate + NAD(+) + H2O = (2S,4S)-4-hydroxy-2,3,4,5-tetrahydrodipicolinate + NADH + H(+). The enzyme catalyses (S)-2,3,4,5-tetrahydrodipicolinate + NADP(+) + H2O = (2S,4S)-4-hydroxy-2,3,4,5-tetrahydrodipicolinate + NADPH + H(+). The protein operates within amino-acid biosynthesis; L-lysine biosynthesis via DAP pathway; (S)-tetrahydrodipicolinate from L-aspartate: step 4/4. Its function is as follows. Catalyzes the conversion of 4-hydroxy-tetrahydrodipicolinate (HTPA) to tetrahydrodipicolinate. This Tolumonas auensis (strain DSM 9187 / NBRC 110442 / TA 4) protein is 4-hydroxy-tetrahydrodipicolinate reductase.